Reading from the N-terminus, the 144-residue chain is Large ribosomal subunit protein uL15 (144 aa).

The interval 1-53 (MRLNTLSPAEGAKHAPKRLGRGIGSGLGKTGGRGHKGQKSRSGGGVRRGFEGG) is disordered. Positions 21–31 (RGIGSGLGKTG) are enriched in gly residues.

It belongs to the universal ribosomal protein uL15 family. Part of the 50S ribosomal subunit.

Binds to the 23S rRNA. In Pectobacterium carotovorum subsp. carotovorum (strain PC1), this protein is Large ribosomal subunit protein uL15.